The primary structure comprises 259 residues: Thiazole synthase (259 aa).

K98 (schiff-base intermediate with DXP) is an active-site residue. Residues G159, 185 to 186 (AG), and 207 to 208 (NS) contribute to the 1-deoxy-D-xylulose 5-phosphate site.

This sequence belongs to the ThiG family. Homotetramer. Forms heterodimers with either ThiH or ThiS.

It localises to the cytoplasm. It carries out the reaction [ThiS sulfur-carrier protein]-C-terminal-Gly-aminoethanethioate + 2-iminoacetate + 1-deoxy-D-xylulose 5-phosphate = [ThiS sulfur-carrier protein]-C-terminal Gly-Gly + 2-[(2R,5Z)-2-carboxy-4-methylthiazol-5(2H)-ylidene]ethyl phosphate + 2 H2O + H(+). The protein operates within cofactor biosynthesis; thiamine diphosphate biosynthesis. In terms of biological role, catalyzes the rearrangement of 1-deoxy-D-xylulose 5-phosphate (DXP) to produce the thiazole phosphate moiety of thiamine. Sulfur is provided by the thiocarboxylate moiety of the carrier protein ThiS. In vitro, sulfur can be provided by H(2)S. This Chlorobium phaeobacteroides (strain DSM 266 / SMG 266 / 2430) protein is Thiazole synthase.